A 1235-amino-acid chain; its full sequence is Phosphorylase b kinase regulatory subunit alpha, liver isoform (1235 aa).

Phosphoserine occurs at positions 697, 731, and 737. Positions 808–838 (LSELYGKAGLNQEWGLIRYISGLLRKKVEVL) are calmodulin-binding. Positions 976–986 (SSASSPAISIH) are enriched in low complexity. The segment at 976–1002 (SSASSPAISIHEVGHTGVTKTERSGIN) is disordered. Ser984, Ser1016, and Ser1044 each carry phosphoserine. Residues 1032–1053 (AYSKSVRSSTPSSPTGTSSSDS) show a composition bias toward low complexity. A disordered region spans residues 1032 to 1060 (AYSKSVRSSTPSSPTGTSSSDSGGHHISW). Residues 1059–1099 (SWGERQGQWLRRRRLDGAINRVPVGFYQRVWKILQKCHGLS) are calmodulin-binding. Cys1232 carries S-farnesyl cysteine lipidation.

It belongs to the phosphorylase b kinase regulatory chain family. As to quaternary structure, hexadecamer of 4 heterotetramers, each composed of alpha, beta, gamma, and delta subunits. Alpha (PHKA1 or PHKA2) and beta (PHKB) are regulatory subunits, gamma (PHKG1 or PHKG2) is the catalytic subunit, and delta is calmodulin. Although the final Cys may be farnesylated, the terminal tripeptide is probably not removed, and the C-terminus is not methylated. Predominantly expressed in liver and other non-muscle tissues.

The protein localises to the cell membrane. Its pathway is glycan biosynthesis; glycogen metabolism. With respect to regulation, by phosphorylation of various serine residues and by calcium. Functionally, phosphorylase b kinase catalyzes the phosphorylation of serine in certain substrates, including troponin I. The alpha chain may bind calmodulin. In Oryctolagus cuniculus (Rabbit), this protein is Phosphorylase b kinase regulatory subunit alpha, liver isoform (PHKA2).